Consider the following 94-residue polypeptide: Aspartyl/glutamyl-tRNA(Asn/Gln) amidotransferase subunit C (94 aa).

The protein belongs to the GatC family. Heterotrimer of A, B and C subunits.

The enzyme catalyses L-glutamyl-tRNA(Gln) + L-glutamine + ATP + H2O = L-glutaminyl-tRNA(Gln) + L-glutamate + ADP + phosphate + H(+). It catalyses the reaction L-aspartyl-tRNA(Asn) + L-glutamine + ATP + H2O = L-asparaginyl-tRNA(Asn) + L-glutamate + ADP + phosphate + 2 H(+). Functionally, allows the formation of correctly charged Asn-tRNA(Asn) or Gln-tRNA(Gln) through the transamidation of misacylated Asp-tRNA(Asn) or Glu-tRNA(Gln) in organisms which lack either or both of asparaginyl-tRNA or glutaminyl-tRNA synthetases. The reaction takes place in the presence of glutamine and ATP through an activated phospho-Asp-tRNA(Asn) or phospho-Glu-tRNA(Gln). The sequence is that of Aspartyl/glutamyl-tRNA(Asn/Gln) amidotransferase subunit C from Caldicellulosiruptor bescii (strain ATCC BAA-1888 / DSM 6725 / KCTC 15123 / Z-1320) (Anaerocellum thermophilum).